Consider the following 491-residue polypeptide: E3 ubiquitin-protein ligase Hakai (491 aa).

Disordered stretches follow at residues 1–20 (MDHTDNELQGTNSSGSLGGL) and 33–61 (KQASKVKPAPRTQRTVSRMPAKAPQGDEE). The RING-type zinc finger occupies 109–149 (CDKCGLPIKVYGRMIPCKHVFCYDCAILHEKKGDKMCPGCS). Positions 148 to 206 (CSDPVQRIEQCTRGSLFMCSIVQGCKRTYLSQRDLQAHINHRHMRAGKPVTRASLENVH) are HYB domain. The C2H2-type zinc finger occupies 164-190 (FMCSIVQGCKRTYLSQRDLQAHINHRH). Phosphoserine occurs at positions 201, 285, and 290. The segment at 255–491 (QPHEDIRAPP…DQTRYRPYYQ (237 aa)) is disordered. 3 stretches are compositionally biased toward pro residues: residues 342–359 (APPPPPPPPISHPMPHPP), 372–389 (APPPPMTSAPPPITPPPG), and 399–423 (MNHPPPGPPPPQHGGPPVTAPPPHH). Residues 427–442 (NSLPQFTEDQGTLSPP) are compositionally biased toward polar residues. A compositionally biased stretch (pro residues) spans 457–478 (PRGPPPPPRMQGPPSQTPLPGP).

It belongs to the Hakai family. As to quaternary structure, homodimer. Interacts with tyrosine-phosphorylated SRC substrates. Component of the WMM complex, a N6-methyltransferase complex composed of a catalytic subcomplex, named MAC, and of an associated subcomplex, named MACOM. The MAC subcomplex is composed of METTL3 and METTL14. The MACOM subcomplex is composed of WTAP, ZC3H13, CBLL1/HAKAI, VIRMA, and, in some cases of RBM15 (RBM15 or RBM15B). Also a component of a MACOM-like complex, named WTAP complex, composed of WTAP, ZC3H13, CBLL1, VIRMA, RBM15, BCLAF1 and THRAP3. In terms of processing, phosphorylated on tyrosine residues. Detected in heart, brain, spleen, lung, liver, skeletal muscle, kidney and testis.

It is found in the nucleus speckle. It localises to the nucleus. The protein resides in the nucleoplasm. Its subcellular location is the cytoplasm. The enzyme catalyses S-ubiquitinyl-[E2 ubiquitin-conjugating enzyme]-L-cysteine + [acceptor protein]-L-lysine = [E2 ubiquitin-conjugating enzyme]-L-cysteine + N(6)-ubiquitinyl-[acceptor protein]-L-lysine.. Its pathway is protein modification; protein ubiquitination. Functionally, E3 ubiquitin-protein ligase that mediates ubiquitination of several tyrosine-phosphorylated Src substrates, including CDH1, CTTN and DOK1. Targets CDH1 for endocytosis and degradation. Associated component of the WMM complex, a complex that mediates N6-methyladenosine (m6A) methylation of RNAs, a modification that plays a role in the efficiency of mRNA splicing and RNA processing. Its function in the WMM complex is unknown. This Mus musculus (Mouse) protein is E3 ubiquitin-protein ligase Hakai.